Consider the following 1383-residue polypeptide: NPC intracellular cholesterol transporter 1 homolog 1 (1383 aa).

Positions 1–20 (MKQLLIFCLLFGSIFHHGDA) are cleaved as a signal peptide. 8 cysteine pairs are disulfide-bonded: cysteine 22-cysteine 76, cysteine 28-cysteine 39, cysteine 65-cysteine 111, cysteine 77-cysteine 115, cysteine 99-cysteine 246, cysteine 102-cysteine 167, cysteine 182-cysteine 187, and cysteine 235-cysteine 251. N-linked (GlcNAc...) asparagine glycosylation is present at asparagine 42. The N-linked (GlcNAc...) asparagine glycan is linked to asparagine 231. 2 helical membrane-spanning segments follow: residues 282–302 (IFVM…GFVF) and 353–373 (PKSH…GMIY). N-linked (GlcNAc...) asparagine glycosylation occurs at asparagine 447. 2 disulfides stabilise this stretch: cysteine 464/cysteine 474 and cysteine 526/cysteine 541. N-linked (GlcNAc...) asparagine glycosylation is present at asparagine 558. 6 helical membrane-spanning segments follow: residues 627–647 (EIVT…FSLG), 665–685 (ICLG…SWGI), 697–717 (ALVV…FMVV), 746–766 (TMPA…IGGF), 780–800 (GLAV…LFVW), and 856–876 (IITG…SSKI). Residues 627 to 800 (EIVTVVIALA…CTIFLALFVW (174 aa)) form the SSD domain. Intrachain disulfides connect cysteine 929-cysteine 934, cysteine 976-cysteine 1046, cysteine 977-cysteine 1005, and cysteine 988-cysteine 1002. N-linked (GlcNAc...) asparagine glycans are attached at residues asparagine 993 and asparagine 1082. 5 helical membrane passes run 1126–1146 (IMPI…GIIC), 1157–1177 (ACAV…MYIF), 1179–1199 (IPVN…LIEF), 1226–1246 (IGPI…MFLS), and 1260–1280 (LFLI…PILL).

It belongs to the patched family.

It localises to the membrane. The catalysed reaction is cholesterol(in) = cholesterol(out). In terms of biological role, involved in the uptake or utilization of cholesterol. Ncr-1 and ncr-2 act redundantly to prevent dauer larva formation under favorable growth conditions, and are required for the normal functioning of ADF, ASI and ASG neurons. This Caenorhabditis elegans protein is NPC intracellular cholesterol transporter 1 homolog 1.